A 557-amino-acid polypeptide reads, in one-letter code: Thermosome subunit 2 (557 aa).

The segment at 527-557 (DLSTGGDDDEEGGAPGGMGGMGGMGGMGGAM) is disordered. The segment covering 539–557 (GAPGGMGGMGGMGGMGGAM) has biased composition (gly residues).

Belongs to the TCP-1 chaperonin family. As to quaternary structure, the thermosome or CCT complex is a oligomeric complex of two octameric double-ring structures; the complex is probably a heterooligomer of CCT1, CCT2 and CCT3 with yet unknown stoichiometry.

Molecular chaperone that assists in the folding or refolding of nascent or denatured proteins along with ATP hydrolysis. ATPase activity is highest in thermosome assemblies containing CCT1:CCT2, followed by assemblies containing CCT1:CCT2:CCT3. Seems to contribute to thermosome ATPase activity. Not required for growth. The chain is Thermosome subunit 2 (cct2) from Haloferax volcanii (strain ATCC 29605 / DSM 3757 / JCM 8879 / NBRC 14742 / NCIMB 2012 / VKM B-1768 / DS2) (Halobacterium volcanii).